The following is a 416-amino-acid chain: UDP-N-acetylglucosamine 1-carboxyvinyltransferase (416 aa).

Lysine 22–asparagine 23 contacts phosphoenolpyruvate. Arginine 92 is a binding site for UDP-N-acetyl-alpha-D-glucosamine. Cysteine 116 serves as the catalytic Proton donor. At cysteine 116 the chain carries 2-(S-cysteinyl)pyruvic acid O-phosphothioketal. UDP-N-acetyl-alpha-D-glucosamine-binding positions include arginine 121–glutamine 125, aspartate 304, and isoleucine 326.

Belongs to the EPSP synthase family. MurA subfamily.

The protein resides in the cytoplasm. The catalysed reaction is phosphoenolpyruvate + UDP-N-acetyl-alpha-D-glucosamine = UDP-N-acetyl-3-O-(1-carboxyvinyl)-alpha-D-glucosamine + phosphate. It functions in the pathway cell wall biogenesis; peptidoglycan biosynthesis. Its function is as follows. Cell wall formation. Adds enolpyruvyl to UDP-N-acetylglucosamine. The sequence is that of UDP-N-acetylglucosamine 1-carboxyvinyltransferase from Desulfatibacillum aliphaticivorans.